The sequence spans 118 residues: Small ribosomal subunit protein uS13 (118 aa).

Residues 94-118 (GLPVRGQRTKTNARTRKGPRKPIKK) form a disordered region.

Belongs to the universal ribosomal protein uS13 family. As to quaternary structure, part of the 30S ribosomal subunit. Forms a loose heterodimer with protein S19. Forms two bridges to the 50S subunit in the 70S ribosome.

Located at the top of the head of the 30S subunit, it contacts several helices of the 16S rRNA. In the 70S ribosome it contacts the 23S rRNA (bridge B1a) and protein L5 of the 50S subunit (bridge B1b), connecting the 2 subunits; these bridges are implicated in subunit movement. Contacts the tRNAs in the A and P-sites. The sequence is that of Small ribosomal subunit protein uS13 from Tolumonas auensis (strain DSM 9187 / NBRC 110442 / TA 4).